The sequence spans 361 residues: Phosphoserine aminotransferase (361 aa).

Arginine 43 contacts L-glutamate. Pyridoxal 5'-phosphate-binding positions include 77–78, tryptophan 103, threonine 153, aspartate 173, and glutamine 196; that span reads AS. Lysine 197 carries the post-translational modification N6-(pyridoxal phosphate)lysine. 238–239 contacts pyridoxal 5'-phosphate; that stretch reads NT.

This sequence belongs to the class-V pyridoxal-phosphate-dependent aminotransferase family. SerC subfamily. Homodimer. The cofactor is pyridoxal 5'-phosphate.

The protein localises to the cytoplasm. It carries out the reaction O-phospho-L-serine + 2-oxoglutarate = 3-phosphooxypyruvate + L-glutamate. The catalysed reaction is 4-(phosphooxy)-L-threonine + 2-oxoglutarate = (R)-3-hydroxy-2-oxo-4-phosphooxybutanoate + L-glutamate. The protein operates within amino-acid biosynthesis; L-serine biosynthesis; L-serine from 3-phospho-D-glycerate: step 2/3. It participates in cofactor biosynthesis; pyridoxine 5'-phosphate biosynthesis; pyridoxine 5'-phosphate from D-erythrose 4-phosphate: step 3/5. In terms of biological role, catalyzes the reversible conversion of 3-phosphohydroxypyruvate to phosphoserine and of 3-hydroxy-2-oxo-4-phosphonooxybutanoate to phosphohydroxythreonine. This chain is Phosphoserine aminotransferase, found in Pseudomonas syringae pv. syringae (strain B728a).